A 514-amino-acid chain; its full sequence is L-carnitine/gamma-butyrobetaine antiporter (514 aa).

At 1-11 (MSKDNKKAGIE) the chain is on the cytoplasmic side. The chain crosses the membrane as a helical span at residues 12-30 (PKVFFPPLIIVGILCWLTV). The Periplasmic portion of the chain corresponds to 31–42 (RDLDASNEVINA). Residues 43-68 (VFSYVTNVWGWAFEWYMVIMFGGWFW) form a helical membrane-spanning segment. Over 69 to 91 (LVFGRYAKKRLGDEKPEFSTASW) the chain is Cytoplasmic. A helical transmembrane segment spans residues 92–112 (IFMMFASCTSAAVLFWGSIEI). The Periplasmic segment spans residues 113 to 131 (YYYISSPPFGMEGYSAPAK). The chain crosses the membrane as a helical span at residues 132–154 (EIGLAYSLFHWGPLPWATYSFLS). Residues 155–185 (VAFAYFFFVRKMEVIRPSSTLTPLVGEKHVN) lie on the Cytoplasmic side of the membrane. The chain crosses the membrane as a helical span at residues 186–216 (GLFGTVVDNFYLVALILAMGTSLGLATPLVT). At 217-230 (ECIQYLFGIPHTLQ) the chain is on the periplasmic side. A helical transmembrane segment spans residues 231-249 (LDAIIISCWILLNAICVAF). Residues 250–251 (GL) lie on the Cytoplasmic side of the membrane. A helical transmembrane segment spans residues 252–277 (QKGVKIASDVRTYLSFLMLGWVFIVG). At 278 to 311 (GASFIVNYFTDSVGTLLMYMPRMLFYTDPIGKGG) the chain is on the periplasmic side. The helical transmembrane segment at 312–335 (FPQAWTVFYWAWWVIYAIQMSIFL) threads the bilayer. Topologically, residues 336–347 (ARISKGRTVREL) are cytoplasmic. Residues 348-369 (CLGMVSGLTAGTWLIWTILGGN) traverse the membrane as a helical segment. Residues 370–404 (TLQLIDQNILNIPQLIDQYGVPRAIIETWAALPLS) lie on the Periplasmic side of the membrane. Residues 405–434 (TATMWGFFILCFIATVTLINACSYTLAMST) traverse the membrane as a helical segment. At 435–445 (CRSMKEGAEPP) the chain is on the cytoplasmic side. A helical transmembrane segment spans residues 446 to 464 (LLVRIGWSVLVGIIGIILL). Topologically, residues 465-468 (ALGG) are periplasmic. Residues 469-492 (LKPIQTAIIAGGCPLFFVNIMVTL) traverse the membrane as a helical segment. Over 493-514 (SFIKDAKVHWKDCSPYTQKMTH) the chain is Cytoplasmic.

Belongs to the BCCT transporter (TC 2.A.15) family. CaiT subfamily. Homotrimer.

The protein resides in the cell inner membrane. The catalysed reaction is 4-(trimethylamino)butanoate(in) + (R)-carnitine(out) = 4-(trimethylamino)butanoate(out) + (R)-carnitine(in). Its pathway is amine and polyamine metabolism; carnitine metabolism. Functionally, catalyzes the exchange of L-carnitine for gamma-butyrobetaine. This Proteus mirabilis (strain HI4320) protein is L-carnitine/gamma-butyrobetaine antiporter.